The primary structure comprises 146 residues: Small ribosomal subunit protein uS5 (146 aa).

One can recognise an S5 DRBM domain in the interval 8–71 (FEEVIVNIGR…DDAFKNIIDV (64 aa)).

This sequence belongs to the universal ribosomal protein uS5 family. In terms of assembly, part of the 30S ribosomal subunit. Contacts proteins S4 and S8.

Functionally, with S4 and S12 plays an important role in translational accuracy. Located at the back of the 30S subunit body where it stabilizes the conformation of the head with respect to the body. In Campylobacter hominis (strain ATCC BAA-381 / DSM 21671 / CCUG 45161 / LMG 19568 / NCTC 13146 / CH001A), this protein is Small ribosomal subunit protein uS5.